The sequence spans 128 residues: Large ribosomal subunit protein bL17 (128 aa).

It belongs to the bacterial ribosomal protein bL17 family. As to quaternary structure, part of the 50S ribosomal subunit. Contacts protein L32.

This chain is Large ribosomal subunit protein bL17, found in Klebsiella pneumoniae (strain 342).